The sequence spans 106 residues: ATP-dependent Clp protease adapter protein ClpS (106 aa).

The span at 1 to 13 shows a compositional bias: basic and acidic residues; the sequence is MPRKTSHEHDHGL. Residues 1 to 21 are disordered; that stretch reads MPRKTSHEHDHGLVVETSKPE.

It belongs to the ClpS family. As to quaternary structure, binds to the N-terminal domain of the chaperone ClpA.

Functionally, involved in the modulation of the specificity of the ClpAP-mediated ATP-dependent protein degradation. The polypeptide is ATP-dependent Clp protease adapter protein ClpS (Xanthomonas campestris pv. campestris (strain 8004)).